The primary structure comprises 84 residues: Acyl carrier protein MbtL (84 aa).

The Carrier domain occupies serine 6–tyrosine 81. Residue serine 41 is modified to O-(pantetheine 4'-phosphoryl)serine.

In terms of processing, 4'-phosphopantetheine is transferred from CoA to a specific serine of apo-ACP, leading to the activated holo-ACP form.

The protein resides in the cytoplasm. It functions in the pathway siderophore biosynthesis; mycobactin biosynthesis. In terms of biological role, acyl carrier protein involved in the formation of acyl-S-ACP intermediates within the mycobactin biosynthesis process. The aliphatic chains carried by ACP are subsequently transferred on to the mycobactin core by MbtK. This chain is Acyl carrier protein MbtL (mbtL), found in Mycobacterium bovis (strain ATCC BAA-935 / AF2122/97).